Consider the following 214-residue polypeptide: MWCFIVFLTIFLPTLEGQYGPAVTGPSLPEELCTKDPQVSRGRFYRLKVRPSFYRRAHPLQVELYQTIHAYGPIIADAYVHVPETAKNSSTAALGIKTLGYWLPKNPDNYKISRALSCYNSVWGNDAIVANSDRELKFNLTGIWYPPTSEFDLIKRPFVKIVAYVTPDPDVRRRRWYRAESQPIRNLDYIAFQHHMRRYKAQMKAFRTQLEMFN.

Positions 1–17 are cleaved as a signal peptide; it reads MWCFIVFLTIFLPTLEG. N-linked (GlcNAc...) asparagine glycosylation is found at Asn88 and Asn139.

Component of the acid-insoluble organic matrix of calcified layers of the shell (at protein level).

The protein resides in the secreted. This is an uncharacterized protein from Lottia gigantea (Giant owl limpet).